A 355-amino-acid chain; its full sequence is Apyrase apy-1 (355 aa).

The Cytoplasmic segment spans residues 1–6 (MTQESN). Residues 7–29 (SNFFNFLLFGFVTAIAFYSGTQF) traverse the membrane as a helical; Signal-anchor for type II membrane protein segment. An N-linked (GlcNAc...) asparagine glycan is attached at asparagine 30. Residues 30-355 (NKSSEQEEHI…PYKYEGIAFA (326 aa)) are Lumenal-facing. Ca(2+) is bound by residues serine 119, glutamate 166, and glutamate 235. Residue asparagine 291 is glycosylated (N-linked (GlcNAc...) asparagine). Glutamate 350 is a Ca(2+) binding site.

It belongs to the apyrase family. Ca(2+) serves as cofactor.

Its subcellular location is the endomembrane system. The catalysed reaction is a ribonucleoside 5'-diphosphate + H2O = a ribonucleoside 5'-phosphate + phosphate + H(+). In terms of biological role, hydrolyzes UDP and to a lesser extent GDP. By preventing the accumulation of NDP, may promote the reglucosylation of incompletely folded glycoproteins in the endoplasmic reticulum following the unfolded protein response. This chain is Apyrase apy-1, found in Caenorhabditis elegans.